A 377-amino-acid chain; its full sequence is MSWSFLTRLLEEINNHSTFVGKIWLTVLIIFRIVLTAVGGESIYYDEQSKFTCNTHQPGCENVCYDAFAPLSHVRFWVFQIILITTPSIMYLGFAMHRIARQPDEQIRRLEKTKSKKRAPIIHRGAMRDYEEAEDNQEEDPMICEEEEPEKDSEKGDKKKHDGRRRIKQDGLMKVYVLQLLFRSVFEVGFLMGQYVLYGFEVIPFFVCSRNPCPHTVDCFVSRPTEKTIFLLIMYAVSALCLFLNLCELFHLGIGGIRDALRQKRKEIQESRKKKPSAPPNYHSVLKKGKLPNGKPVFPGNGVSEGFEMPVHELDRLRQHLKLAQEHLDLAFHLNPSADIAHASRSSSPEANSIAAEQNRLNLAQEKGVGSREKSGL.

At M1–T18 the chain is on the cytoplasmic side. A helical transmembrane segment spans residues F19–G39. The Extracellular portion of the chain corresponds to G40–R75. The chain crosses the membrane as a helical span at residues F76–M96. Topologically, residues H97–K174 are cytoplasmic. Residues D129–G163 form a disordered region. A compositionally biased stretch (acidic residues) spans E131 to K151. A helical membrane pass occupies residues V175–L197. The Extracellular segment spans residues Y198–T228. A helical membrane pass occupies residues I229–L249. Over F250 to L377 the chain is Cytoplasmic. Disordered regions lie at residues K266 to L286 and A341 to L377. Polar residues predominate over residues S344–N362.

Belongs to the connexin family. Gamma-type subfamily. As to quaternary structure, a connexon is composed of a hexamer of connexins.

The protein localises to the cell membrane. Its subcellular location is the cell junction. The protein resides in the gap junction. One gap junction consists of a cluster of closely packed pairs of transmembrane channels, the connexons, through which materials of low MW diffuse from one cell to a neighboring cell. The chain is Gap junction gamma-1 protein (gjc1) from Xenopus laevis (African clawed frog).